The following is a 691-amino-acid chain: Elongation factor G (691 aa).

Residues 8-283 (EDYRNFGIMA…AVVDYLPSPA (276 aa)) enclose the tr-type G domain. Residues 17 to 24 (AHIDAGKT), 81 to 85 (DTPGH), and 135 to 138 (NKMD) contribute to the GTP site.

This sequence belongs to the TRAFAC class translation factor GTPase superfamily. Classic translation factor GTPase family. EF-G/EF-2 subfamily.

The protein localises to the cytoplasm. Its function is as follows. Catalyzes the GTP-dependent ribosomal translocation step during translation elongation. During this step, the ribosome changes from the pre-translocational (PRE) to the post-translocational (POST) state as the newly formed A-site-bound peptidyl-tRNA and P-site-bound deacylated tRNA move to the P and E sites, respectively. Catalyzes the coordinated movement of the two tRNA molecules, the mRNA and conformational changes in the ribosome. This is Elongation factor G from Methylobacterium radiotolerans (strain ATCC 27329 / DSM 1819 / JCM 2831 / NBRC 15690 / NCIMB 10815 / 0-1).